The sequence spans 290 residues: Nitrogenase iron protein 2 (290 aa).

10–17 is a binding site for ATP; that stretch reads GKGGIGKS. Residue Cys-98 participates in [4Fe-4S] cluster binding. Arg-101 carries the ADP-ribosylarginine; by dinitrogenase reductase ADP-ribosyltransferase modification. Cys-133 is a [4Fe-4S] cluster binding site.

It belongs to the NifH/BchL/ChlL family. Homodimer. [4Fe-4S] cluster serves as cofactor. Post-translationally, the reversible ADP-ribosylation of Arg-101 inactivates the nitrogenase reductase and regulates nitrogenase activity.

The catalysed reaction is N2 + 8 reduced [2Fe-2S]-[ferredoxin] + 16 ATP + 16 H2O = H2 + 8 oxidized [2Fe-2S]-[ferredoxin] + 2 NH4(+) + 16 ADP + 16 phosphate + 6 H(+). Its function is as follows. The key enzymatic reactions in nitrogen fixation are catalyzed by the nitrogenase complex, which has 2 components: the iron protein (component 2) and a component 1 which is either a molybdenum-iron protein, a vanadium-iron, or an iron-iron protein. The sequence is that of Nitrogenase iron protein 2 (vnfH) from Azotobacter vinelandii.